The primary structure comprises 793 residues: Toll-like receptor 6 (793 aa).

The N-terminal stretch at 1-23 is a signal peptide; that stretch reads MIKDKESPIRSCHFVYIVALVFG. At 24 to 584 the chain is on the extracellular side; sequence TIIQFSDESE…FQVSELSCNT (561 aa). 19 LRR repeats span residues 54 to 77, 78 to 101, 102 to 122, 123 to 147, 148 to 168, 169 to 196, 197 to 219, 220 to 250, 251 to 277, 278 to 303, 304 to 330, 331 to 354, 355 to 378, 379 to 404, 405 to 428, 429 to 449, 450 to 473, 474 to 495, and 496 to 519; these read TKVL…FLSG, LRVL…FNHD, LEYL…PITT, TLKH…GNLT, QLNF…LPIA, HLHL…ILNT, KKLH…SANS, LGCL…GGPT, LLNF…WPKP, IEYL…YKTT, LKAL…VFSE, MNIL…EPST, FKFL…TLAR, LETL…DMLS, LETL…SWVG, SIVV…RCLP, PRIK…TGLE, TLQE…GIFS, and SLSI…QSCQ. The N-linked (GlcNAc...) asparagine glycan is linked to asparagine 63. A disulfide bridge links cysteine 117 with cysteine 140. An N-linked (GlcNAc...) asparagine glycan is attached at asparagine 145. Cysteine 235 and cysteine 265 are oxidised to a cystine. N-linked (GlcNAc...) asparagine glycans are attached at residues asparagine 253 and asparagine 285. A disulfide bond links cysteine 348 and cysteine 373. N-linked (GlcNAc...) asparagine glycosylation is present at asparagine 359. 2 N-linked (GlcNAc...) asparagine glycosylation sites follow: asparagine 423 and asparagine 434. Cysteine 424 and cysteine 447 are joined by a disulfide. One can recognise an LRRCT domain in the interval 520-575; the sequence is KIRSLKAGNNPFQCSCELRDFIQSVGQVSSDVVEGWPESYKCDYPESYKGTPLKDF. A helical membrane pass occupies residues 585–605; sequence ALLIITIVVPGLVLAVAVTVL. The Cytoplasmic segment spans residues 606 to 793; that stretch reads CIYLDLPWYL…KLMEKAAEIH (188 aa). Residues 640 to 781 enclose the TIR domain; the sequence is LQFHAFISYS…LFWANLRASI (142 aa).

Belongs to the Toll-like receptor family. In terms of assembly, homodimer (via cytoplasmic TIR domain). Heterodimer with TLR2 via their respective extracellular domains. Binds MYD88 via their respective TIR domains. Interacts with CD36, following CD36 stimulation by oxLDL or amyloid-beta 42, and forms a heterodimer with TLR4. The trimeric complex is internalized and triggers inflammatory response. LYN kinase activity facilitates TLR4-TLR6 heterodimerization and signal initiation. The heterodimer TLR2:TLR6 interacts with CD14 and CD36 in response to triacylated lipopeptides. Highest expression levels seen in blood and lymph node, intermediate expression seen in spleen and lowest expression seen in the liver, lung and udder cistern.

Its subcellular location is the cell membrane. The protein resides in the cytoplasmic vesicle. It is found in the phagosome membrane. It localises to the membrane raft. The protein localises to the golgi apparatus. Participates in the innate immune response to Gram-positive bacteria and fungi. Specifically recognizes diacylated and, to a lesser extent, triacylated lipopeptides. In response to diacylated lipopeptides, forms the activation cluster TLR2:TLR6:CD14:CD36, this cluster triggers signaling from the cell surface and subsequently is targeted to the Golgi in a lipid-raft dependent pathway. Acts via MYD88 and TRAF6, leading to NF-kappa-B activation, cytokine secretion and the inflammatory response. Recognizes mycoplasmal macrophage-activating lipopeptide-2kD (MALP-2), soluble tuberculosis factor (STF), phenol-soluble modulin (PSM) and B.burgdorferi outer surface protein A lipoprotein (OspA-L) cooperatively with TLR2. In complex with TLR4, promotes sterile inflammation in monocytes/macrophages in response to oxidized low-density lipoprotein (oxLDL) or amyloid-beta 42. In this context, the initial signal is provided by oxLDL- or amyloid-beta 42-binding to CD36. This event induces the formation of a heterodimer of TLR4 and TLR6, which is rapidly internalized and triggers inflammatory response, leading to the NF-kappa-B-dependent production of CXCL1, CXCL2 and CCL9 cytokines, via MYD88 signaling pathway, and CCL5 cytokine, via TICAM1 signaling pathway, as well as IL1B secretion. The sequence is that of Toll-like receptor 6 from Bos taurus (Bovine).